The following is a 95-amino-acid chain: Co-chaperonin GroES (95 aa).

This sequence belongs to the GroES chaperonin family. Heptamer of 7 subunits arranged in a ring. Interacts with the chaperonin GroEL.

Its subcellular location is the cytoplasm. Its function is as follows. Together with the chaperonin GroEL, plays an essential role in assisting protein folding. The GroEL-GroES system forms a nano-cage that allows encapsulation of the non-native substrate proteins and provides a physical environment optimized to promote and accelerate protein folding. GroES binds to the apical surface of the GroEL ring, thereby capping the opening of the GroEL channel. The chain is Co-chaperonin GroES from Rickettsia akari (strain Hartford).